Here is a 359-residue protein sequence, read N- to C-terminus: MIAAQAKLVYQLNKYYTERCQARKAAIAKTIREVCKVVSDVLKEVEVQEPRFISSLSEIDARYEGLEVISPTEFEVVLYLNQMGVFNFVDDGSLPGCAVLKLSDGRKRSMSLWVEFITASGYLSARKIRSRFQTLVAQAVDKCSYRDVVKMIADTSEVKLRIRERYVVQITPAFKCTGIWPRSAAQWPMPHIPWPGPNRVAEVKAEGFNLLSKECYSLTGKQSSAESDAWVLQFGEAENRLLMGGCRNKCLSVLKTLRDRHLELPGQPLNNYHMKTLLLYECEKHPRETDWDESCLGDRLNGILLQLISCLQCRRCPHYFLPNLDLFQGKPHSALESAAKQTWRLAREILTNPKSLDKL.

This sequence belongs to the mab-21 family.

It is found in the nucleus. Its subcellular location is the cytoplasm. Required for several aspects of embryonic development including normal development of the eye. The sequence is that of Protein mab-21-like 2 (MAB21L2) from Homo sapiens (Human).